Here is a 52-residue protein sequence, read N- to C-terminus: ATP synthase F(1) complex subunit epsilon, mitochondrial (52 aa).

N6-acetyllysine; alternate is present on residues lysine 21, lysine 32, and lysine 37. An N6-succinyllysine; alternate mark is found at lysine 21, lysine 32, and lysine 37. Lysine 44 carries the post-translational modification N6-acetyllysine.

Belongs to the eukaryotic ATPase epsilon family. Component of the ATP synthase complex composed at least of ATP5F1A/subunit alpha, ATP5F1B/subunit beta, ATP5MC1/subunit c (homooctomer), MT-ATP6/subunit a, MT-ATP8/subunit 8, ATP5ME/subunit e, ATP5MF/subunit f, ATP5MG/subunit g, ATP5MK/subunit k, ATP5MJ/subunit j, ATP5F1C/subunit gamma, ATP5F1D/subunit delta, ATP5F1E/subunit epsilon, ATP5PF/subunit F6, ATP5PB/subunit b, ATP5PD/subunit d, ATP5PO/subunit OSCP. ATP synthase complex consists of a soluble F(1) head domain (subunits alpha(3) and beta(3)) - the catalytic core - and a membrane F(0) domain - the membrane proton channel (subunits c, a, 8, e, f, g, k and j). These two domains are linked by a central stalk (subunits gamma, delta, and epsilon) rotating inside the F1 region and a stationary peripheral stalk (subunits F6, b, d, and OSCP).

The protein resides in the mitochondrion. It is found in the mitochondrion inner membrane. Functionally, subunit epsilon, of the mitochondrial membrane ATP synthase complex (F(1)F(0) ATP synthase or Complex V) that produces ATP from ADP in the presence of a proton gradient across the membrane which is generated by electron transport complexes of the respiratory chain. ATP synthase complex consist of a soluble F(1) head domain - the catalytic core - and a membrane F(1) domain - the membrane proton channel. These two domains are linked by a central stalk rotating inside the F(1) region and a stationary peripheral stalk. During catalysis, ATP synthesis in the catalytic domain of F(1) is coupled via a rotary mechanism of the central stalk subunits to proton translocation. In vivo, can only synthesize ATP although its ATP hydrolase activity can be activated artificially in vitro. May be essential for the assembly of F(1) and may play an important role in the incorporation of the hydrophobic subunit c into the F(1)-c oligomer rotor of the mitochondrial ATP synthase complex. The chain is ATP synthase F(1) complex subunit epsilon, mitochondrial from Mus musculus (Mouse).